We begin with the raw amino-acid sequence, 134 residues long: Cytochrome b (134 aa).

The next 3 helical transmembrane spans lie at 33-53 (FGSL…FLAM), 77-98 (WLLR…YLHV), and 113-133 (WNIG…GYVL). 2 residues coordinate heme b: H83 and H97.

Belongs to the cytochrome b family. As to quaternary structure, the cytochrome bc1 complex contains 11 subunits: 3 respiratory subunits (MT-CYB, CYC1 and UQCRFS1), 2 core proteins (UQCRC1 and UQCRC2) and 6 low-molecular weight proteins (UQCRH/QCR6, UQCRB/QCR7, UQCRQ/QCR8, UQCR10/QCR9, UQCR11/QCR10 and a cleavage product of UQCRFS1). This cytochrome bc1 complex then forms a dimer. It depends on heme b as a cofactor.

Its subcellular location is the mitochondrion inner membrane. Its function is as follows. Component of the ubiquinol-cytochrome c reductase complex (complex III or cytochrome b-c1 complex) that is part of the mitochondrial respiratory chain. The b-c1 complex mediates electron transfer from ubiquinol to cytochrome c. Contributes to the generation of a proton gradient across the mitochondrial membrane that is then used for ATP synthesis. This Chiroderma salvini (Salvin's big-eyed bat) protein is Cytochrome b (MT-CYB).